A 403-amino-acid chain; its full sequence is Synaptotagmin-7 (403 aa).

Residues 1 to 16 (MYRDPEAASPGAPSRD) lie on the Vesicular side of the membrane. A helical membrane pass occupies residues 17–37 (VLLVSAIITVSLSVTVVLCGL). The Cytoplasmic portion of the chain corresponds to 38 to 403 (CHWCQRKLGK…PVAQWHQLKA (366 aa)). Ser-52 bears the Phosphoserine mark. The interval 53-106 (LETVGTPDSGRGRSEKKAIKLPAGGKAVNTAPVPGQTPHDESDRRTEPRSSVSD) is disordered. Thr-58 carries the phosphothreonine modification. Ser-61 bears the Phosphoserine mark. The span at 90-100 (PHDESDRRTEP) shows a compositional bias: basic and acidic residues. Residues Ser-119 and Ser-122 each carry the phosphoserine modification. 2 consecutive C2 domains span residues 135 to 255 (NLGR…TFWK) and 266 to 399 (SRGE…AQWH). Ca(2+) is bound by residues Asp-166, Asp-172, Asp-225, Asp-227, Ser-230, Asp-233, Asp-297, Asp-303, Asp-357, Asp-359, Ser-362, and Asp-365.

This sequence belongs to the synaptotagmin family. As to quaternary structure, homodimer. Can also form heterodimers with SYT6, SYT9 and SYT10. Interacts with calmodulin (CALM1, CALM2 or CALM3). Interacts with CD63; required for localization to lysosomes. Interacts with APP. Ca(2+) is required as a cofactor. Palmitoylated at its vesicular N-terminus; palmitoylation is required for localization to lysosome and phagocytosis in macrophages. As to expression, expressed in a variety of adult and fetal tissues.

The protein resides in the cell membrane. Its subcellular location is the presynaptic cell membrane. It is found in the cytoplasmic vesicle. It localises to the secretory vesicle. The protein localises to the synaptic vesicle membrane. The protein resides in the lysosome membrane. Its subcellular location is the phagosome membrane. It is found in the peroxisome membrane. It localises to the secretory vesicle membrane. Functionally, ca(2+) sensor involved in Ca(2+)-dependent exocytosis of secretory and synaptic vesicles through Ca(2+) and phospholipid binding to the C2 domain. Ca(2+) induces binding of the C2-domains to phospholipid membranes and to assembled SNARE-complexes; both actions contribute to triggering exocytosis. SYT7 binds Ca(2+) with high affinity and slow kinetics compared to other synaptotagmins. Involved in Ca(2+)-triggered lysosomal exocytosis, a major component of the plasma membrane repair. Ca(2+)-regulated delivery of lysosomal membranes to the cell surface is also involved in the phagocytic uptake of particles by macrophages. Ca(2+)-triggered lysosomal exocytosis also plays a role in bone remodeling by regulating secretory pathways in osteoclasts and osteoblasts. In case of infection, involved in participates cell invasion by Trypanosoma cruzi via Ca(2+)-triggered lysosomal exocytosis. Involved in cholesterol transport from lysosome to peroxisome by promoting membrane contacts between lysosomes and peroxisomes: probably acts by promoting vesicle fusion by binding phosphatidylinositol-4,5-bisphosphate on peroxisomal membranes. Acts as a key mediator of synaptic facilitation, a process also named short-term synaptic potentiation: synaptic facilitation takes place at synapses with a low initial release probability and is caused by influx of Ca(2+) into the axon terminal after spike generation, increasing the release probability of neurotransmitters. Probably mediates synaptic facilitation by directly increasing the probability of release. May also contribute to synaptic facilitation by regulating synaptic vesicle replenishment, a process required to ensure that synaptic vesicles are ready for the arrival of the next action potential: SYT7 is required for synaptic vesicle replenishment by acting as a sensor for Ca(2+) and by forming a complex with calmodulin. Also acts as a regulator of Ca(2+)-dependent insulin and glucagon secretion in beta-cells. Triggers exocytosis by promoting fusion pore opening and fusion pore expansion in chromaffin cells. Also regulates the secretion of some non-synaptic secretory granules of specialized cells. In Homo sapiens (Human), this protein is Synaptotagmin-7.